The following is a 248-amino-acid chain: Ubiquinone/menaquinone biosynthesis C-methyltransferase UbiE (248 aa).

S68 and D92 together coordinate S-adenosyl-L-methionine.

Belongs to the class I-like SAM-binding methyltransferase superfamily. MenG/UbiE family.

The enzyme catalyses a 2-demethylmenaquinol + S-adenosyl-L-methionine = a menaquinol + S-adenosyl-L-homocysteine + H(+). The catalysed reaction is a 2-methoxy-6-(all-trans-polyprenyl)benzene-1,4-diol + S-adenosyl-L-methionine = a 5-methoxy-2-methyl-3-(all-trans-polyprenyl)benzene-1,4-diol + S-adenosyl-L-homocysteine + H(+). It participates in quinol/quinone metabolism; menaquinone biosynthesis; menaquinol from 1,4-dihydroxy-2-naphthoate: step 2/2. Its pathway is cofactor biosynthesis; ubiquinone biosynthesis. Its function is as follows. Methyltransferase required for the conversion of demethylmenaquinol (DMKH2) to menaquinol (MKH2) and the conversion of 2-polyprenyl-6-methoxy-1,4-benzoquinol (DDMQH2) to 2-polyprenyl-3-methyl-6-methoxy-1,4-benzoquinol (DMQH2). The chain is Ubiquinone/menaquinone biosynthesis C-methyltransferase UbiE from Rickettsia massiliae (strain Mtu5).